The sequence spans 179 residues: Large ribosomal subunit protein bL17 (179 aa).

Positions 127–179 are disordered; sequence TDTLPDTVIDTGPDSAPDPVPGSEPGSAAGDLPDADTAPADPGESSSNQRVIR. Low complexity predominate over residues 154 to 168; sequence AAGDLPDADTAPADP. The span at 170–179 shows a compositional bias: polar residues; it reads ESSSNQRVIR.

The protein belongs to the bacterial ribosomal protein bL17 family. Part of the 50S ribosomal subunit. Contacts protein L32.

The sequence is that of Large ribosomal subunit protein bL17 from Tropheryma whipplei (strain TW08/27) (Whipple's bacillus).